A 413-amino-acid chain; its full sequence is Calsequestrin-2 (413 aa).

A signal peptide spans 1-19 (MKRIYLLVVGLYLLSFSRA). Position 282 is a phosphotyrosine (Tyr282). Asn335 carries N-linked (GlcNAc...) asparagine glycosylation. The disordered stretch occupies residues 365–413 (VLSGKINTEDDDNEDEDDDGDNDNDDDDDDDDNSDEDNDDSDDDDDDDE). Residues 373–413 (EDDDNEDEDDDGDNDNDDDDDDDDNSDEDNDDSDDDDDDDE) show a composition bias toward acidic residues. Phosphoserine is present on residues Ser398 and Ser405.

The protein belongs to the calsequestrin family. In terms of assembly, monomer, homodimer and homooligomer. Mostly monomeric in the absence of calcium. Forms higher oligomers in a calcium-dependent manner. Dimers associate to form tetramers, that then form linear homomer chains. Interacts with ASPH and TRDN. Post-translationally, phosphorylation in the C-terminus, probably by CK2, moderately increases calcium buffering capacity. N-glycosylated. As to expression, detected in stomach and vas deferens (at protein level).

It is found in the sarcoplasmic reticulum lumen. Functionally, calsequestrin is a high-capacity, moderate affinity, calcium-binding protein and thus acts as an internal calcium store in muscle. Calcium ions are bound by clusters of acidic residues at the protein surface, especially at the interface between subunits. Can bind around 60 Ca(2+) ions. Regulates the release of lumenal Ca(2+) via the calcium release channel RYR2; this plays an important role in triggering muscle contraction. Plays a role in excitation-contraction coupling in the heart and in regulating the rate of heart beats. In Rattus norvegicus (Rat), this protein is Calsequestrin-2 (Casq2).